We begin with the raw amino-acid sequence, 144 residues long: Transcription antitermination protein NusB (144 aa).

This sequence belongs to the NusB family.

Functionally, involved in transcription antitermination. Required for transcription of ribosomal RNA (rRNA) genes. Binds specifically to the boxA antiterminator sequence of the ribosomal RNA (rrn) operons. This Dictyoglomus turgidum (strain DSM 6724 / Z-1310) protein is Transcription antitermination protein NusB.